The sequence spans 883 residues: uncharacterized protein (883 aa).

Residues 258-373 (INNQSDNQSN…NQFNKPDNEP (116 aa)) form a disordered region. Composition is skewed to low complexity over residues 259–268 (NNQSDNQSNS), 277–317 (EPNG…SNSE), and 324–333 (NEPNTEPNTE). Residues 334-347 (SNGQSNSELNNQSD) show a composition bias toward polar residues. The segment covering 348 to 368 (NHPNNEPNSEPNNEPNNQFNK) has biased composition (low complexity).

Belongs to the mimivirus L137 family.

This is an uncharacterized protein from Acanthamoeba polyphaga mimivirus (APMV).